The primary structure comprises 304 residues: UDP-3-O-acyl-N-acetylglucosamine deacetylase (304 aa).

The Zn(2+) site is built by histidine 79, histidine 238, and aspartate 242. Catalysis depends on histidine 265, which acts as the Proton donor.

It belongs to the LpxC family. Zn(2+) serves as cofactor.

The catalysed reaction is a UDP-3-O-[(3R)-3-hydroxyacyl]-N-acetyl-alpha-D-glucosamine + H2O = a UDP-3-O-[(3R)-3-hydroxyacyl]-alpha-D-glucosamine + acetate. Its pathway is glycolipid biosynthesis; lipid IV(A) biosynthesis; lipid IV(A) from (3R)-3-hydroxytetradecanoyl-[acyl-carrier-protein] and UDP-N-acetyl-alpha-D-glucosamine: step 2/6. Functionally, catalyzes the hydrolysis of UDP-3-O-myristoyl-N-acetylglucosamine to form UDP-3-O-myristoylglucosamine and acetate, the committed step in lipid A biosynthesis. The polypeptide is UDP-3-O-acyl-N-acetylglucosamine deacetylase (Chromobacterium violaceum (strain ATCC 12472 / DSM 30191 / JCM 1249 / CCUG 213 / NBRC 12614 / NCIMB 9131 / NCTC 9757 / MK)).